Reading from the N-terminus, the 388-residue chain is Succinate--CoA ligase [ADP-forming] subunit beta (388 aa).

The region spanning 9 to 244 (KQLFAEYGLP…PSQDDAREAH (236 aa)) is the ATP-grasp domain. ATP is bound by residues Lys46, 53-55 (GRG), Glu99, Thr102, and Glu107. Mg(2+)-binding residues include Asn199 and Asp213. Substrate-binding positions include Asn264 and 321–323 (GIV).

This sequence belongs to the succinate/malate CoA ligase beta subunit family. As to quaternary structure, heterotetramer of two alpha and two beta subunits. The cofactor is Mg(2+).

It carries out the reaction succinate + ATP + CoA = succinyl-CoA + ADP + phosphate. The enzyme catalyses GTP + succinate + CoA = succinyl-CoA + GDP + phosphate. It functions in the pathway carbohydrate metabolism; tricarboxylic acid cycle; succinate from succinyl-CoA (ligase route): step 1/1. Its function is as follows. Succinyl-CoA synthetase functions in the citric acid cycle (TCA), coupling the hydrolysis of succinyl-CoA to the synthesis of either ATP or GTP and thus represents the only step of substrate-level phosphorylation in the TCA. The beta subunit provides nucleotide specificity of the enzyme and binds the substrate succinate, while the binding sites for coenzyme A and phosphate are found in the alpha subunit. The chain is Succinate--CoA ligase [ADP-forming] subunit beta from Pseudomonas putida (strain ATCC 700007 / DSM 6899 / JCM 31910 / BCRC 17059 / LMG 24140 / F1).